The primary structure comprises 309 residues: tRNA-dihydrouridine(16) synthase (309 aa).

Residues 7 to 9 (PME) and Gln-68 contribute to the FMN site. The Proton donor role is filled by Cys-98. FMN contacts are provided by residues Arg-137, Asn-198, and 220-221 (GC).

This sequence belongs to the Dus family. DusC subfamily. Requires FMN as cofactor.

It carries out the reaction 5,6-dihydrouridine(16) in tRNA + NADP(+) = uridine(16) in tRNA + NADPH + H(+). The enzyme catalyses 5,6-dihydrouridine(16) in tRNA + NAD(+) = uridine(16) in tRNA + NADH + H(+). Functionally, catalyzes the synthesis of 5,6-dihydrouridine (D), a modified base found in the D-loop of most tRNAs, via the reduction of the C5-C6 double bond in target uridines. Specifically modifies U16 in tRNAs. This Azotobacter vinelandii protein is tRNA-dihydrouridine(16) synthase.